The primary structure comprises 274 residues: Pyrogallol hydroxytransferase small subunit (274 aa).

Residues Cys13, Cys16, Cys19, Cys23, Cys68, Cys71, Cys76, Cys109, Cys126, Cys129, Cys145, and Cys149 each contribute to the [4Fe-4S] cluster site.

Heterodimer of a large and a small subunit. [4Fe-4S] cluster serves as cofactor.

The enzyme catalyses 1,2,3,5-tetrahydroxybenzene + 1,2,3-trihydroxybenzene = 1,2,3,5-tetrahydroxybenzene + 1,3,5-trihydroxybenzene. Isomerization of pyrogallol to phloroglucin. In Pelobacter acidigallici, this protein is Pyrogallol hydroxytransferase small subunit (bthL).